We begin with the raw amino-acid sequence, 377 residues long: Beta sliding clamp (377 aa).

Belongs to the beta sliding clamp family. Forms a ring-shaped head-to-tail homodimer around DNA which binds and tethers DNA polymerases and other proteins to the DNA. The DNA replisome complex has a single clamp-loading complex (3 tau and 1 each of delta, delta', psi and chi subunits) which binds 3 Pol III cores (1 core on the leading strand and 2 on the lagging strand) each with a beta sliding clamp dimer. Additional proteins in the replisome are other copies of gamma, psi and chi, Ssb, DNA helicase and RNA primase.

The protein localises to the cytoplasm. Functionally, confers DNA tethering and processivity to DNA polymerases and other proteins. Acts as a clamp, forming a ring around DNA (a reaction catalyzed by the clamp-loading complex) which diffuses in an ATP-independent manner freely and bidirectionally along dsDNA. Initially characterized for its ability to contact the catalytic subunit of DNA polymerase III (Pol III), a complex, multichain enzyme responsible for most of the replicative synthesis in bacteria; Pol III exhibits 3'-5' exonuclease proofreading activity. The beta chain is required for initiation of replication as well as for processivity of DNA replication. The sequence is that of Beta sliding clamp (dnaN) from Staphylococcus epidermidis (strain ATCC 35984 / DSM 28319 / BCRC 17069 / CCUG 31568 / BM 3577 / RP62A).